A 645-amino-acid chain; its full sequence is Beta-galactosidase BgaA (645 aa).

Arg102 serves as a coordination point for substrate. Cys106 is a binding site for Zn(2+). A substrate-binding site is contributed by Asn140. The Proton donor role is filled by Glu141. Residues Cys150, Cys152, and Cys155 each coordinate Zn(2+). The Nucleophile role is filled by Glu312. Substrate-binding positions include Trp320 and 360–363 (EQMH).

The protein belongs to the glycosyl hydrolase 42 family.

The catalysed reaction is Hydrolysis of terminal non-reducing beta-D-galactose residues in beta-D-galactosides.. Functionally, hydrolyzes chromogen 5-bromo-4-chloro-3-indolyl-beta-D-galactopyranoside (X-Gal) and p-nitrophenyl-beta-D-galactoside (pNPGal). In Thermus sp, this protein is Beta-galactosidase BgaA.